Consider the following 182-residue polypeptide: MSRIGNIPVLIPNNVFVKKQDNIIYINGPLGKLNQKIIGDINIIINNNNIIVKRKHNDKKNRALHGLYRMLIYNMIKGVYNGFKKKLELIGVGFRAKNNSNILDLNIGYSHNIIIKLPKSITLEVKMEKNKNTQIILKSYDKQLLGIVAAKIRSLRKPEPYKGKGIRYINEYVIKKTGKSAK.

This sequence belongs to the universal ribosomal protein uL6 family. Part of the 50S ribosomal subunit.

In terms of biological role, this protein binds to the 23S rRNA, and is important in its secondary structure. It is located near the subunit interface in the base of the L7/L12 stalk, and near the tRNA binding site of the peptidyltransferase center. The polypeptide is Large ribosomal subunit protein uL6 (Karelsulcia muelleri (strain GWSS) (Sulcia muelleri)).